We begin with the raw amino-acid sequence, 123 residues long: S-adenosylmethionine decarboxylase proenzyme 2 (123 aa).

The active-site Schiff-base intermediate with substrate; via pyruvic acid is the Ser-65. A Pyruvic acid (Ser); by autocatalysis modification is found at Ser-65. The Proton acceptor; for processing activity role is filled by His-70. Cys-85 functions as the Proton donor; for catalytic activity in the catalytic mechanism.

This sequence belongs to the prokaryotic AdoMetDC family. Type 1 subfamily. Heterotetramer of two alpha and two beta chains arranged as a dimer of alpha/beta heterodimers. Pyruvate is required as a cofactor. Is synthesized initially as an inactive proenzyme. Formation of the active enzyme involves a self-maturation process in which the active site pyruvoyl group is generated from an internal serine residue via an autocatalytic post-translational modification. Two non-identical subunits are generated from the proenzyme in this reaction, and the pyruvate is formed at the N-terminus of the alpha chain, which is derived from the carboxyl end of the proenzyme. The post-translation cleavage follows an unusual pathway, termed non-hydrolytic serinolysis, in which the side chain hydroxyl group of the serine supplies its oxygen atom to form the C-terminus of the beta chain, while the remainder of the serine residue undergoes an oxidative deamination to produce ammonia and the pyruvoyl group blocking the N-terminus of the alpha chain.

It catalyses the reaction S-adenosyl-L-methionine + H(+) = S-adenosyl 3-(methylsulfanyl)propylamine + CO2. The protein operates within amine and polyamine biosynthesis; S-adenosylmethioninamine biosynthesis; S-adenosylmethioninamine from S-adenosyl-L-methionine: step 1/1. Its function is as follows. Catalyzes the decarboxylation of S-adenosylmethionine to S-adenosylmethioninamine (dcAdoMet), the propylamine donor required for the synthesis of the polyamines spermine and spermidine from the diamine putrescine. In Bacillus cereus (strain ATCC 14579 / DSM 31 / CCUG 7414 / JCM 2152 / NBRC 15305 / NCIMB 9373 / NCTC 2599 / NRRL B-3711), this protein is S-adenosylmethionine decarboxylase proenzyme 2.